A 231-amino-acid polypeptide reads, in one-letter code: Small ribosomal subunit protein uS3 (231 aa).

One can recognise a KH type-2 domain in the interval 39–107 (IRKFIMKTLP…GVSLNIVEIR (69 aa)).

It belongs to the universal ribosomal protein uS3 family. As to quaternary structure, part of the 30S ribosomal subunit. Forms a tight complex with proteins S10 and S14.

Binds the lower part of the 30S subunit head. Binds mRNA in the 70S ribosome, positioning it for translation. The chain is Small ribosomal subunit protein uS3 from Zymomonas mobilis subsp. mobilis (strain ATCC 31821 / ZM4 / CP4).